Consider the following 762-residue polypeptide: 5-methyltetrahydropteroyltriglutamate--homocysteine methyltransferase (762 aa).

Residues 18-21 and K112 contribute to the 5-methyltetrahydropteroyltri-L-glutamate site; that span reads REWK. L-homocysteine-binding positions include 435 to 437 and E488; that span reads IGS. L-methionine is bound by residues 435-437 and E488; that span reads IGS. Residues 519 to 520 and W565 contribute to the 5-methyltetrahydropteroyltri-L-glutamate site; that span reads RC. Position 603 (D603) interacts with L-homocysteine. D603 provides a ligand contact to L-methionine. Residue E609 participates in 5-methyltetrahydropteroyltri-L-glutamate binding. Residues H645, C647, and E669 each coordinate Zn(2+). Catalysis depends on H698, which acts as the Proton donor. C730 is a binding site for Zn(2+).

The protein belongs to the vitamin-B12 independent methionine synthase family. Zn(2+) serves as cofactor.

It catalyses the reaction 5-methyltetrahydropteroyltri-L-glutamate + L-homocysteine = tetrahydropteroyltri-L-glutamate + L-methionine. Its pathway is amino-acid biosynthesis; L-methionine biosynthesis via de novo pathway; L-methionine from L-homocysteine (MetE route): step 1/1. Functionally, catalyzes the transfer of a methyl group from 5-methyltetrahydrofolate to homocysteine resulting in methionine formation. In Bacillus velezensis (strain DSM 23117 / BGSC 10A6 / LMG 26770 / FZB42) (Bacillus amyloliquefaciens subsp. plantarum), this protein is 5-methyltetrahydropteroyltriglutamate--homocysteine methyltransferase.